The primary structure comprises 699 residues: Integrator complex subunit 10 (699 aa).

A phosphoserine mark is found at Ser-220 and Ser-370. Lys-453 is covalently cross-linked (Glycyl lysine isopeptide (Lys-Gly) (interchain with G-Cter in SUMO2)).

This sequence belongs to the Integrator subunit 10 family. As to quaternary structure, component of the Integrator complex, composed of core subunits INTS1, INTS2, INTS3, INTS4, INTS5, INTS6, INTS7, INTS8, INTS9/RC74, INTS10, INTS11/CPSF3L, INTS12, INTS13, INTS14 and INTS15. The core complex associates with protein phosphatase 2A subunits PPP2CA and PPP2R1A, to form the Integrator-PP2A (INTAC) complex. INTS10 is part of the tail subcomplex, composed of INTS10, INTS13, INTS14 and INTS15.

The protein resides in the nucleus. In terms of biological role, component of the integrator complex, a multiprotein complex that terminates RNA polymerase II (Pol II) transcription in the promoter-proximal region of genes. The integrator complex provides a quality checkpoint during transcription elongation by driving premature transcription termination of transcripts that are unfavorably configured for transcriptional elongation: the complex terminates transcription by (1) catalyzing dephosphorylation of the C-terminal domain (CTD) of Pol II subunit POLR2A/RPB1 and SUPT5H/SPT5, (2) degrading the exiting nascent RNA transcript via endonuclease activity and (3) promoting the release of Pol II from bound DNA. The integrator complex is also involved in terminating the synthesis of non-coding Pol II transcripts, such as enhancer RNAs (eRNAs), small nuclear RNAs (snRNAs), telomerase RNAs and long non-coding RNAs (lncRNAs). Within the integrator complex, INTS10 is part of the integrator tail module that acts as a platform for the recruitment of transcription factors at promoters. May be not involved in the recruitment of cytoplasmic dynein to the nuclear envelope, probably as component of the integrator complex. The polypeptide is Integrator complex subunit 10 (INTS10) (Macaca fascicularis (Crab-eating macaque)).